The chain runs to 509 residues: MALPWYRVHTVVLNDPGRLISVHLMHTALVSGWAGSMALYELAVFDPSDPVLNPMWRQGMFVMPFMARLGVTDSWGGWSITGESVSNPGLWSFEGVALTHIVLSGLLFLASIWHWVYWDLDLFRDPRTLEPALDLPKVFGIHLVLSSLLCFGFGAFHVTGLFGPGIWISDAYGLTGRIQSVAPAWGPEGFNPFNPGGIASHHIAAGTVGILAGVFHLNVRPPQRLYRALRMGNIETVLSSSIAAVFFASFVVSGTMWYGAASTPIELFGPTRYQWDSGYFQQEIEKRVEESLSNGLSLPEAWSNIPDKLAFYDYIGNNPAKGGLFRAGPMNKGDGIAEAWLGHPVFQDKEGHELIVRRMPAFFENFPIILVDKDGIIRADIPFRRAESKYSIEQVGVTCSFYGGKLNNQSFKDASTVKKYARKAQFGEVFEFDRTILDSDGVFRSSPRGWFTFGHANFALLFFFGHLWHGSRTLFRDVFAGIGAEVTEQVEFGVFQKVGDKTTKKQGYV.

Transmembrane regions (helical) follow at residues 21-36 (SVHL…WAGS), 101-115 (IVLS…IWHW), 140-156 (GIHL…FGAF), 203-218 (IAAG…FHLN), 237-252 (VLSS…SFVV), and 457-472 (NFAL…HGSR).

This sequence belongs to the PsbB/PsbC family. PsbB subfamily. PSII is composed of 1 copy each of membrane proteins PsbA, PsbB, PsbC, PsbD, PsbE, PsbF, PsbH, PsbI, PsbJ, PsbK, PsbL, PsbM, PsbT, PsbY, PsbZ, Psb30/Ycf12, at least 3 peripheral proteins of the oxygen-evolving complex and a large number of cofactors. It forms dimeric complexes. It depends on Binds multiple chlorophylls. PSII binds additional chlorophylls, carotenoids and specific lipids. as a cofactor.

Its subcellular location is the plastid. The protein localises to the chloroplast thylakoid membrane. One of the components of the core complex of photosystem II (PSII). It binds chlorophyll and helps catalyze the primary light-induced photochemical processes of PSII. PSII is a light-driven water:plastoquinone oxidoreductase, using light energy to abstract electrons from H(2)O, generating O(2) and a proton gradient subsequently used for ATP formation. This chain is Photosystem II CP47 reaction center protein, found in Cyanidium caldarium (Red alga).